A 158-amino-acid polypeptide reads, in one-letter code: NAD(P)H-quinone oxidoreductase subunit J, chloroplastic (158 aa).

It belongs to the complex I 30 kDa subunit family. NDH is composed of at least 16 different subunits, 5 of which are encoded in the nucleus.

Its subcellular location is the plastid. The protein resides in the chloroplast thylakoid membrane. The catalysed reaction is a plastoquinone + NADH + (n+1) H(+)(in) = a plastoquinol + NAD(+) + n H(+)(out). It carries out the reaction a plastoquinone + NADPH + (n+1) H(+)(in) = a plastoquinol + NADP(+) + n H(+)(out). NDH shuttles electrons from NAD(P)H:plastoquinone, via FMN and iron-sulfur (Fe-S) centers, to quinones in the photosynthetic chain and possibly in a chloroplast respiratory chain. The immediate electron acceptor for the enzyme in this species is believed to be plastoquinone. Couples the redox reaction to proton translocation, and thus conserves the redox energy in a proton gradient. The sequence is that of NAD(P)H-quinone oxidoreductase subunit J, chloroplastic from Capsella bursa-pastoris (Shepherd's purse).